A 40-amino-acid chain; its full sequence is Sulfur globule protein TR0 (40 aa).

To C.vinosum CV1 and CV2. In terms of assembly, the protein envelope of the sulfur globules is composed of the three different proteins TR0, TR1 and TR2.

Structural protein of the sulfur globules, which are intracellular globules that serve for sulfur storage in purple sulfur bacteria. The chain is Sulfur globule protein TR0 from Thiocapsa roseopersicina.